The primary structure comprises 250 residues: tRNA (guanine-N(1)-)-methyltransferase (250 aa).

S-adenosyl-L-methionine-binding positions include Gly-116 and 136-141 (IGDYVL).

It belongs to the RNA methyltransferase TrmD family. As to quaternary structure, homodimer.

The protein localises to the cytoplasm. It catalyses the reaction guanosine(37) in tRNA + S-adenosyl-L-methionine = N(1)-methylguanosine(37) in tRNA + S-adenosyl-L-homocysteine + H(+). Its function is as follows. Specifically methylates guanosine-37 in various tRNAs. This chain is tRNA (guanine-N(1)-)-methyltransferase, found in Stutzerimonas stutzeri (strain A1501) (Pseudomonas stutzeri).